A 306-amino-acid chain; its full sequence is UDP-3-O-acyl-N-acetylglucosamine deacetylase (306 aa).

Residues His79, His238, and Asp242 each coordinate Zn(2+). His265 acts as the Proton donor in catalysis.

It belongs to the LpxC family. Requires Zn(2+) as cofactor.

The catalysed reaction is a UDP-3-O-[(3R)-3-hydroxyacyl]-N-acetyl-alpha-D-glucosamine + H2O = a UDP-3-O-[(3R)-3-hydroxyacyl]-alpha-D-glucosamine + acetate. Its pathway is glycolipid biosynthesis; lipid IV(A) biosynthesis; lipid IV(A) from (3R)-3-hydroxytetradecanoyl-[acyl-carrier-protein] and UDP-N-acetyl-alpha-D-glucosamine: step 2/6. Catalyzes the hydrolysis of UDP-3-O-myristoyl-N-acetylglucosamine to form UDP-3-O-myristoylglucosamine and acetate, the committed step in lipid A biosynthesis. The chain is UDP-3-O-acyl-N-acetylglucosamine deacetylase from Shewanella piezotolerans (strain WP3 / JCM 13877).